We begin with the raw amino-acid sequence, 444 residues long: ATP-dependent protease ATPase subunit HslU (444 aa).

ATP contacts are provided by residues Ile18, 60 to 65, Asp256, Glu322, and Arg394; that span reads GVGKTE.

It belongs to the ClpX chaperone family. HslU subfamily. In terms of assembly, a double ring-shaped homohexamer of HslV is capped on each side by a ring-shaped HslU homohexamer. The assembly of the HslU/HslV complex is dependent on binding of ATP.

It is found in the cytoplasm. In terms of biological role, ATPase subunit of a proteasome-like degradation complex; this subunit has chaperone activity. The binding of ATP and its subsequent hydrolysis by HslU are essential for unfolding of protein substrates subsequently hydrolyzed by HslV. HslU recognizes the N-terminal part of its protein substrates and unfolds these before they are guided to HslV for hydrolysis. The chain is ATP-dependent protease ATPase subunit HslU from Serratia proteamaculans (strain 568).